The following is a 177-amino-acid chain: Protein GrpE (177 aa).

It belongs to the GrpE family. As to quaternary structure, homodimer. K(+) serves as cofactor.

It localises to the cytoplasm. In terms of biological role, participates actively in the response to hyperosmotic and heat shock by preventing the aggregation of stress-denatured proteins, in association with DnaK and GrpE. It is the nucleotide exchange factor for DnaK and may function as a thermosensor. Unfolded proteins bind initially to DnaJ; upon interaction with the DnaJ-bound protein, DnaK hydrolyzes its bound ATP, resulting in the formation of a stable complex. GrpE releases ADP from DnaK; ATP binding to DnaK triggers the release of the substrate protein, thus completing the reaction cycle. Several rounds of ATP-dependent interactions between DnaJ, DnaK and GrpE are required for fully efficient folding. The polypeptide is Protein GrpE (Thermus thermophilus (strain ATCC 27634 / DSM 579 / HB8)).